Reading from the N-terminus, the 349-residue chain is ATPase GET3 (349 aa).

26–33 contacts ATP; that stretch reads KGGVGKTT. The active site involves D57. The ATP site is built by E242 and N269. Residues C281 and C284 each contribute to the Zn(2+) site.

It belongs to the arsA ATPase family. As to quaternary structure, homodimer. Component of the Golgi to ER traffic (GET) complex, which is composed of GET1, GET2 and GET3. Within the complex, GET1 and GET2 form a heterotetramer which is stabilized by phosphatidylinositol binding and which binds to the GET3 homodimer. Interacts with the chloride channel protein GEF1.

Its subcellular location is the cytoplasm. The protein resides in the endoplasmic reticulum. It is found in the golgi apparatus. Its function is as follows. ATPase required for the post-translational delivery of tail-anchored (TA) proteins to the endoplasmic reticulum. Recognizes and selectively binds the transmembrane domain of TA proteins in the cytosol. This complex then targets to the endoplasmic reticulum by membrane-bound receptors GET1 and GET2, where the tail-anchored protein is released for insertion. This process is regulated by ATP binding and hydrolysis. ATP binding drives the homodimer towards the closed dimer state, facilitating recognition of newly synthesized TA membrane proteins. ATP hydrolysis is required for insertion. Subsequently, the homodimer reverts towards the open dimer state, lowering its affinity for the GET1-GET2 receptor, and returning it to the cytosol to initiate a new round of targeting. Cooperates with the HDEL receptor ERD2 to mediate the ATP-dependent retrieval of resident ER proteins that contain a C-terminal H-D-E-L retention signal from the Golgi to the ER. Involved in low-level resistance to the oxyanions arsenite and arsenate, and in heat tolerance. This chain is ATPase GET3, found in Candida tropicalis (strain ATCC MYA-3404 / T1) (Yeast).